The sequence spans 709 residues: Elongation factor G (709 aa).

The tr-type G domain maps to 9 to 292 (AYYRNIGISA…AVVEYLPSPT (284 aa)). GTP contacts are provided by residues 18–25 (AHIDAGKT), 89–93 (DTPGH), and 143–146 (NKMD).

This sequence belongs to the TRAFAC class translation factor GTPase superfamily. Classic translation factor GTPase family. EF-G/EF-2 subfamily.

The protein localises to the cytoplasm. Catalyzes the GTP-dependent ribosomal translocation step during translation elongation. During this step, the ribosome changes from the pre-translocational (PRE) to the post-translocational (POST) state as the newly formed A-site-bound peptidyl-tRNA and P-site-bound deacylated tRNA move to the P and E sites, respectively. Catalyzes the coordinated movement of the two tRNA molecules, the mRNA and conformational changes in the ribosome. This chain is Elongation factor G, found in Blochmanniella floridana.